Consider the following 454-residue polypeptide: Alpha-1,3-mannosyl-glycoprotein 4-beta-N-acetylglucosaminyltransferase C (454 aa).

Topologically, residues 1–6 are cytoplasmic; sequence MRCHLK. Residues 7 to 24 form a helical; Signal-anchor for type II membrane protein membrane-spanning segment; the sequence is KWVVVAAGLSILTSLYVY. Topologically, residues 25 to 454 are lumenal; sequence MQRAQSGNLK…VWTVKEDKTI (430 aa). 2 N-linked (GlcNAc...) asparagine glycosylation sites follow: asparagine 58 and asparagine 189.

This sequence belongs to the glycosyltransferase 54 family. The cofactor is a divalent metal cation.

It localises to the golgi apparatus membrane. The enzyme catalyses N(4)-{beta-D-GlcNAc-(1-&gt;2)-alpha-D-Man-(1-&gt;3)-[beta-D-GlcNAc-(1-&gt;2)-alpha-D-Man-(1-&gt;6)]-beta-D-Man-(1-&gt;4)-beta-D-GlcNAc-(1-&gt;4)-beta-D-GlcNAc}-L-asparaginyl-[protein] + UDP-N-acetyl-alpha-D-glucosamine = N(4)-{beta-D-GlcNAc-(1-&gt;2)-[beta-D-GlcNAc-(1-&gt;4)]-alpha-D-Man-(1-&gt;3)-[beta-D-GlcNAc-(1-&gt;2)-alpha-D-Man-(1-&gt;6)]-beta-D-Man-(1-&gt;4)-beta-D-GlcNAc-(1-&gt;4)-beta-D-GlcNAc}-L-asparaginyl-[protein] + UDP + H(+). Its pathway is protein modification; protein glycosylation. Its function is as follows. Glycosyltransferase that participates in the transfer of N-acetylglucosamine (GlcNAc) to the core mannose residues of N-linked glycans. Catalyzes the formation of the GlcNAcbeta1-4 branch on the GlcNAcbeta1-2Manalpha1-3 arm of the core structure of N-linked glycans. The protein is Alpha-1,3-mannosyl-glycoprotein 4-beta-N-acetylglucosaminyltransferase C (mgat4c) of Danio rerio (Zebrafish).